Consider the following 119-residue polypeptide: Large ribosomal subunit protein uL18 (119 aa).

The interval 1–25 (MITKIDKNKVRKKRHARVRSKISGT) is disordered. Basic residues predominate over residues 9-20 (KVRKKRHARVRS).

The protein belongs to the universal ribosomal protein uL18 family. In terms of assembly, part of the 50S ribosomal subunit; part of the 5S rRNA/L5/L18/L25 subcomplex. Contacts the 5S and 23S rRNAs.

Functionally, this is one of the proteins that bind and probably mediate the attachment of the 5S RNA into the large ribosomal subunit, where it forms part of the central protuberance. This is Large ribosomal subunit protein uL18 from Listeria innocua serovar 6a (strain ATCC BAA-680 / CLIP 11262).